A 77-amino-acid polypeptide reads, in one-letter code: Translation initiation factor IF-1, chloroplastic (77 aa).

An S1-like domain is found at 1–71 (MKEQKLIHEG…TRGRIIYRLR (71 aa)).

This sequence belongs to the IF-1 family. As to quaternary structure, component of the 30S ribosomal translation pre-initiation complex which assembles on the 30S ribosome in the order IF-2 and IF-3, IF-1 and N-formylmethionyl-tRNA(fMet); mRNA recruitment can occur at any time during PIC assembly.

It localises to the plastid. The protein localises to the chloroplast. One of the essential components for the initiation of protein synthesis. Stabilizes the binding of IF-2 and IF-3 on the 30S subunit to which N-formylmethionyl-tRNA(fMet) subsequently binds. Helps modulate mRNA selection, yielding the 30S pre-initiation complex (PIC). Upon addition of the 50S ribosomal subunit IF-1, IF-2 and IF-3 are released leaving the mature 70S translation initiation complex. The sequence is that of Translation initiation factor IF-1, chloroplastic from Phalaenopsis aphrodite subsp. formosana (Moth orchid).